The following is a 136-amino-acid chain: Large ribosomal subunit protein uL16 (136 aa).

Belongs to the universal ribosomal protein uL16 family. As to quaternary structure, part of the 50S ribosomal subunit.

Its function is as follows. Binds 23S rRNA and is also seen to make contacts with the A and possibly P site tRNAs. The sequence is that of Large ribosomal subunit protein uL16 from Shewanella loihica (strain ATCC BAA-1088 / PV-4).